Here is a 38-residue protein sequence, read N- to C-terminus: Photosystem II reaction center protein X (38 aa).

Residues 9 to 29 (ISSLTAGGLVVLTIAVALIVI) traverse the membrane as a helical segment.

This sequence belongs to the PsbX family. Type 1 subfamily. PSII is composed of 1 copy each of membrane proteins PsbA, PsbB, PsbC, PsbD, PsbE, PsbF, PsbH, PsbI, PsbJ, PsbK, PsbL, PsbM, PsbT, PsbX, PsbY, PsbZ, Psb30/Ycf12, at least 3 peripheral proteins of the oxygen-evolving complex and a large number of cofactors. It forms dimeric complexes.

It is found in the plastid. Its subcellular location is the chloroplast thylakoid membrane. In terms of biological role, involved in the binding and/or turnover of quinones at the Q(B) site of photosystem II (PSII). PSII is a light-driven water plastoquinone oxidoreductase, using light energy to abstract electrons from H(2)O, generating a proton gradient subsequently used for ATP formation. The sequence is that of Photosystem II reaction center protein X from Trieres chinensis (Marine centric diatom).